Reading from the N-terminus, the 580-residue chain is Protein O-linked-mannose beta-1,4-N-acetylglucosaminyltransferase 2 (580 aa).

Residues 1–4 (MHLS) lie on the Cytoplasmic side of the membrane. The chain crosses the membrane as a helical; Signal-anchor for type II membrane protein span at residues 5–25 (AVLNALLVSVLAAVLWKHVRL). At 26–580 (REHAASLEEE…PFADVLVCST (555 aa)) the chain is on the lumenal side. Asparagine 99 and asparagine 276 each carry an N-linked (GlcNAc...) asparagine glycan. The Fibronectin type-III domain occupies 488–580 (ARCQASVQGA…PFADVLVCST (93 aa)).

The protein belongs to the glycosyltransferase 61 family.

It is found in the endoplasmic reticulum membrane. It catalyses the reaction 3-O-(alpha-D-mannosyl)-L-threonyl-[protein] + UDP-N-acetyl-alpha-D-glucosamine = 3-O-(N-acetyl-beta-D-glucosaminyl-(1-&gt;4)-alpha-D-mannosyl)-L-threonyl-[protein] + UDP + H(+). It participates in protein modification; protein glycosylation. Its function is as follows. O-linked mannose beta-1,4-N-acetylglucosaminyltransferase that transfers UDP-N-acetyl-D-glucosamine to the 4-position of the mannose to generate N-acetyl-D-glucosamine-beta-1,4-O-D-mannosylprotein. Involved in the biosynthesis of the phosphorylated O-mannosyl trisaccharide (N-acetylgalactosamine-beta-3-N-acetylglucosamine-beta-4-(phosphate-6-)mannose), a carbohydrate structure present in alpha-dystroglycan (DAG1), which is required for binding laminin G-like domain-containing extracellular proteins with high affinity. The sequence is that of Protein O-linked-mannose beta-1,4-N-acetylglucosaminyltransferase 2 (POMGNT2) from Bos taurus (Bovine).